We begin with the raw amino-acid sequence, 155 residues long: MQGLVLQLTRVGFLLLLWLFIWSVLRILRTDIYAPTGAVMVRRGLALRGSLLPNRQRRHVARQLVVTEGALAGTRITLGNQPVLIGRADDSTLVLTDDYASTRHARLSPRGSEWYVEDLGSTNGTYLDRAKVTTAVKVPIGAPVRIGKTVIELRP.

A helical transmembrane segment spans residues leucine 6–leucine 28. Threonine 36 is subject to Phosphothreonine. Positions valine 83–valine 132 constitute an FHA domain.

In terms of processing, phosphorylated by PknB. Dephosphorylated by PstP.

It localises to the cell membrane. In Mycolicibacterium smegmatis (strain ATCC 700084 / mc(2)155) (Mycobacterium smegmatis), this protein is FHA domain-containing protein FhaB (fhaB).